The chain runs to 444 residues: C4-dicarboxylate transport protein (444 aa).

Helical transmembrane passes span 15 to 35 (VIVA…FGVA), 46 to 66 (LIKM…IAGM), 78 to 98 (YALL…LIVV), 143 to 163 (IVGA…VIFG), 199 to 219 (PIGA…GSLV), 224 to 244 (LMIC…GGIA), 291 to 311 (VVGL…AIYL), 332 to 352 (ITLL…TGSG), and 354 to 374 (IVLA…LALI). The interval 422–444 (GIADTRPEDDLGVAEGPTPSNVK) is disordered.

This sequence belongs to the dicarboxylate/amino acid:cation symporter (DAACS) (TC 2.A.23) family.

The protein resides in the cell inner membrane. Its function is as follows. Responsible for the transport of dicarboxylates such as succinate, fumarate, and malate from the periplasm across the membrane. In Pseudomonas fluorescens (strain Pf0-1), this protein is C4-dicarboxylate transport protein.